Here is a 456-residue protein sequence, read N- to C-terminus: Bifunctional protein GlmU (456 aa).

Positions Met-1–Arg-228 are pyrophosphorylase. Residues Leu-10–Gly-13, Lys-24, Gln-75, and Gly-80–Thr-81 each bind UDP-N-acetyl-alpha-D-glucosamine. Asp-105 provides a ligand contact to Mg(2+). 4 residues coordinate UDP-N-acetyl-alpha-D-glucosamine: Gly-142, Glu-157, Asn-172, and Asn-226. Residue Asn-226 participates in Mg(2+) binding. Residues Leu-229–Ser-249 are linker. The segment at Gly-250–Gly-456 is N-acetyltransferase. 2 residues coordinate UDP-N-acetyl-alpha-D-glucosamine: Arg-331 and Lys-349. The active-site Proton acceptor is His-361. Residues Tyr-364 and Asn-375 each contribute to the UDP-N-acetyl-alpha-D-glucosamine site. Acetyl-CoA contacts are provided by residues Ala-378, Asn-384–Tyr-385, Ala-421, and Arg-437.

In the N-terminal section; belongs to the N-acetylglucosamine-1-phosphate uridyltransferase family. The protein in the C-terminal section; belongs to the transferase hexapeptide repeat family. In terms of assembly, homotrimer. The cofactor is Mg(2+).

Its subcellular location is the cytoplasm. It catalyses the reaction alpha-D-glucosamine 1-phosphate + acetyl-CoA = N-acetyl-alpha-D-glucosamine 1-phosphate + CoA + H(+). It carries out the reaction N-acetyl-alpha-D-glucosamine 1-phosphate + UTP + H(+) = UDP-N-acetyl-alpha-D-glucosamine + diphosphate. It functions in the pathway nucleotide-sugar biosynthesis; UDP-N-acetyl-alpha-D-glucosamine biosynthesis; N-acetyl-alpha-D-glucosamine 1-phosphate from alpha-D-glucosamine 6-phosphate (route II): step 2/2. It participates in nucleotide-sugar biosynthesis; UDP-N-acetyl-alpha-D-glucosamine biosynthesis; UDP-N-acetyl-alpha-D-glucosamine from N-acetyl-alpha-D-glucosamine 1-phosphate: step 1/1. Its pathway is bacterial outer membrane biogenesis; LPS lipid A biosynthesis. Functionally, catalyzes the last two sequential reactions in the de novo biosynthetic pathway for UDP-N-acetylglucosamine (UDP-GlcNAc). The C-terminal domain catalyzes the transfer of acetyl group from acetyl coenzyme A to glucosamine-1-phosphate (GlcN-1-P) to produce N-acetylglucosamine-1-phosphate (GlcNAc-1-P), which is converted into UDP-GlcNAc by the transfer of uridine 5-monophosphate (from uridine 5-triphosphate), a reaction catalyzed by the N-terminal domain. The polypeptide is Bifunctional protein GlmU (Gloeobacter violaceus (strain ATCC 29082 / PCC 7421)).